The following is a 176-amino-acid chain: Inner membrane-spanning protein YciB (176 aa).

5 helical membrane passes run 22-42 (IYYA…YTWL), 50-70 (VALI…YYHN), 81-101 (IYSL…KPLI), 121-141 (IAWA…AFWL), and 149-169 (FKVF…GIYI).

It belongs to the YciB family.

It is found in the cell inner membrane. Its function is as follows. Plays a role in cell envelope biogenesis, maintenance of cell envelope integrity and membrane homeostasis. This Sodalis glossinidius (strain morsitans) protein is Inner membrane-spanning protein YciB.